The sequence spans 107 residues: Nucleoid-associated protein Oant_0022 (107 aa).

Belongs to the YbaB/EbfC family. As to quaternary structure, homodimer.

The protein localises to the cytoplasm. It is found in the nucleoid. In terms of biological role, binds to DNA and alters its conformation. May be involved in regulation of gene expression, nucleoid organization and DNA protection. In Brucella anthropi (strain ATCC 49188 / DSM 6882 / CCUG 24695 / JCM 21032 / LMG 3331 / NBRC 15819 / NCTC 12168 / Alc 37) (Ochrobactrum anthropi), this protein is Nucleoid-associated protein Oant_0022.